We begin with the raw amino-acid sequence, 420 residues long: Histidine--tRNA ligase (420 aa).

This sequence belongs to the class-II aminoacyl-tRNA synthetase family. Homodimer.

It is found in the cytoplasm. The enzyme catalyses tRNA(His) + L-histidine + ATP = L-histidyl-tRNA(His) + AMP + diphosphate + H(+). This chain is Histidine--tRNA ligase, found in Streptomyces avermitilis (strain ATCC 31267 / DSM 46492 / JCM 5070 / NBRC 14893 / NCIMB 12804 / NRRL 8165 / MA-4680).